Here is a 260-residue protein sequence, read N- to C-terminus: ELL-associated factor 2 (260 aa).

Residues 17–104 (LKLGESFEKQ…TGECRLEKLS (88 aa)) form a necessary for interaction with ELL region. The segment covering 116-126 (GSSKIQYRKEQ) has biased composition (basic and acidic residues). 2 disordered regions span residues 116–154 (GSSKIQYRKEQQQQQMWNSARTPNLVKHSPSEDKMSPAS) and 170–234 (MDQM…HNRF). 3 positions are modified to phosphoserine: Ser-146, Ser-151, and Ser-154. Over residues 174–192 (SSCDSSSDSKSSSSSSSED) the composition is skewed to low complexity. Positions 177–260 (DSSSDSKSSS…LSESGSDSDD (84 aa)) are necessary for transactivation activity. The segment covering 225-234 (PDIDASHNRF) has biased composition (basic and acidic residues). The tract at residues 246–260 (RNDLQLSESGSDSDD) is necessary for interaction with TCEA1 and transactivation activity.

The protein belongs to the EAF family. In terms of assembly, isoform 1 and isoform 2 interact with TCEA1. Component of the super elongation complex (SEC), at least composed of EAF1, EAF2, CDK9, MLLT3/AF9, AFF (AFF1 or AFF4), the P-TEFb complex and ELL (ELL, ELL2 or ELL3). Interacts with ELL and ELL2. As to expression, expressed in heart, brain, placenta, lung, skeletal muscle, kidney, pancreas, spleen, prostate, testis, small intestine, colon, adrenal, bone marrow, lymph node, spinal gland, stomach, thyroid, trachea, thymus, liver and leukocytes.

It is found in the nucleus speckle. Its function is as follows. Acts as a transcriptional transactivator of TCEA1 elongation activity. Acts as a transcriptional transactivator of ELL and ELL2 elongation activities. Potent inducer of apoptosis in prostatic and non-prostatic cell lines. Inhibits prostate tumor growth in vivo. This Homo sapiens (Human) protein is ELL-associated factor 2 (EAF2).